The primary structure comprises 221 residues: Riboflavin kinase (221 aa).

Positions 1 to 92 are H-T-H motif-like; that stretch reads MVTPEDLECL…YRLFGRQEKS (92 aa). Positions 93–221 are riboflavin kinase; sequence LMLNGTVQSG…GDEVTIEVTL (129 aa). A CDP-binding site is contributed by 102 to 107; that stretch reads GLGEGA. Mg(2+) contacts are provided by threonine 131 and asparagine 133. FMN contacts are provided by threonine 188 and glutamate 196. A CDP-binding site is contributed by 201–204; the sequence is EGLR.

The protein belongs to the archaeal riboflavin kinase family. Mg(2+) serves as cofactor.

The catalysed reaction is riboflavin + CTP = CDP + FMN + H(+). The protein operates within cofactor biosynthesis; FMN biosynthesis; FMN from riboflavin (CTP route): step 1/1. Catalyzes the CTP-dependent phosphorylation of riboflavin (vitamin B2) to form flavin mononucleotide (FMN). This chain is Riboflavin kinase (ribK), found in Methanospirillum hungatei JF-1 (strain ATCC 27890 / DSM 864 / NBRC 100397 / JF-1).